The chain runs to 1030 residues: Subtilin biosynthesis protein SpaB (1030 aa).

This sequence to S.epidermidis EpiB and L.lactis NisB.

Its subcellular location is the cell membrane. Involved in the post-translational modification of the lantibiotic subtilin. This Bacillus subtilis protein is Subtilin biosynthesis protein SpaB (spaB).